The primary structure comprises 653 residues: Elongation factor 4 (653 aa).

A disordered region spans residues 1–30 (MRTPCSQHRRDRPSAIGSQLPDADTLDTRQ). A tr-type G domain is found at 50 to 231 (AQIRNFCIIA…EVVRQVPPPQ (182 aa)). Residues 62 to 67 (DHGKST) and 178 to 181 (NKID) each bind GTP.

It belongs to the TRAFAC class translation factor GTPase superfamily. Classic translation factor GTPase family. LepA subfamily.

The protein localises to the cell membrane. The catalysed reaction is GTP + H2O = GDP + phosphate + H(+). Its function is as follows. Required for accurate and efficient protein synthesis under certain stress conditions. May act as a fidelity factor of the translation reaction, by catalyzing a one-codon backward translocation of tRNAs on improperly translocated ribosomes. Back-translocation proceeds from a post-translocation (POST) complex to a pre-translocation (PRE) complex, thus giving elongation factor G a second chance to translocate the tRNAs correctly. Binds to ribosomes in a GTP-dependent manner. The protein is Elongation factor 4 of Mycobacterium bovis (strain ATCC BAA-935 / AF2122/97).